The primary structure comprises 188 residues: Shikimate kinase (188 aa).

21-26 (GAGKTT) is an ATP binding site. Threonine 25 serves as a coordination point for Mg(2+). Substrate-binding residues include aspartate 43, arginine 67, and glycine 90. Residue arginine 130 participates in ATP binding. Arginine 148 contacts substrate.

Belongs to the shikimate kinase family. As to quaternary structure, monomer. Mg(2+) serves as cofactor.

The protein resides in the cytoplasm. It catalyses the reaction shikimate + ATP = 3-phosphoshikimate + ADP + H(+). Its pathway is metabolic intermediate biosynthesis; chorismate biosynthesis; chorismate from D-erythrose 4-phosphate and phosphoenolpyruvate: step 5/7. Catalyzes the specific phosphorylation of the 3-hydroxyl group of shikimic acid using ATP as a cosubstrate. The chain is Shikimate kinase from Geobacillus thermodenitrificans (strain NG80-2).